The primary structure comprises 316 residues: Prenytransferase adrG (316 aa).

The next 7 helical transmembrane spans lie at 36–56 (LLGF…CASI), 60–80 (KIPI…SIFL), 131–151 (VLIY…FFAL), 163–183 (PQIT…SLGL), 191–211 (PTVC…VIYS), 247–267 (GFLA…VVSV), and 294–314 (KSAF…EYCL).

It belongs to the UbiA prenyltransferase family. Mg(2+) serves as cofactor.

It localises to the membrane. It carries out the reaction 3,5-dimethylorsellinate + (2E,6E)-farnesyl diphosphate = (3R)-3-farnesyl-6-hydroxy-2,3,5-trimethyl-4-oxocyclohexa-1,5-diene-1-carboxylate + diphosphate + H(+). Its pathway is secondary metabolite biosynthesis; terpenoid biosynthesis. Prenytransferase; part of the gene cluster that mediates the biosynthesis of andrastins, meroterpenoid compounds that exhibit inhibitory activity against ras farnesyltransferase, suggesting that they could be promising leads for antitumor agents. The first step of the pathway is the synthesis of 3,5-dimethylorsellinic acid (DMOA) by the polyketide synthase adrD via condensation of one acetyl-CoA starter unit with 3 malonyl-CoA units and 2 methylations. DMAO is then converted to farnesyl-DMAO by the prenyltransferase adrG. The methyltransferase adrK catalyzes the methylation of the carboxyl group of farnesyl-DMAO to farnesyl-DMAO methyl ester which is further converted to epoxyfarnesyl-DMAO methyl ester by the FAD-dependent monooxygenase adrH. The terpene cyclase adrI then catalyzes the carbon skeletal rearrangement to generate the andrastin E, the first compound in the pathway having the andrastin scaffold, with the tetracyclic ring system. The post-cyclization tailoring enzymes adrF, adrE, adrJ, and adrA, are involved in the conversion of andrastin E into andrastin A. The short chain dehydrogenase adrF is responsible for the oxidation of the C-3 a hydroxyl group of andrastin E to yield the corresponding ketone, andrastin D. The ketoreductase adrE stereoselectively reduces the carbonyl moiety to reverse the stereochemistry of the C-3 position to yield andrastin F. The acetyltransferase adrJ is the acetyltransferase that attaches the acetyl group to the C-3 hydroxyl group of andrastin F to yield andrastin C. Finally, the cytochrome P450 monooxygenase adrA catalyzes two sequential oxidation reactions of the C-23 methyl group, to generate the corresponding alcohol andrastin B, and aldehyde andrastin A. The polypeptide is Prenytransferase adrG (Penicillium roqueforti).